Reading from the N-terminus, the 771-residue chain is Choline transporter-like protein 1 (771 aa).

Residues 96–116 (FLFFVFLCGWVVVAGFGIMWG) form a helical membrane-spanning segment. N-linked (GlcNAc...) asparagine glycans are attached at residues N141 and N259. 4 consecutive transmembrane segments (helical) span residues 312 to 332 (WWQT…WTVI), 335 to 355 (LLGS…LGFG), 392 to 412 (LVVA…ILFI), and 441 to 461 (LFPF…AIWL). The N-linked (GlcNAc...) asparagine glycan is linked to N480. Transmembrane regions (helical) follow at residues 514–534 (LFAF…ALAG), 566–586 (LGSI…RVLL), 603–623 (WFLM…KFLT), 662–682 (AGIL…ILSF), and 701–721 (YYFV…DLFF).

It belongs to the CTL (choline transporter-like) family.

Its subcellular location is the membrane. The polypeptide is Choline transporter-like protein 1 (chtl-1) (Caenorhabditis elegans).